We begin with the raw amino-acid sequence, 338 residues long: Glycerol-3-phosphate dehydrogenase [NAD(P)+] (338 aa).

NADPH contacts are provided by serine 13, tryptophan 14, and lysine 108. Sn-glycerol 3-phosphate contacts are provided by lysine 108, glycine 139, and serine 141. Residue alanine 143 participates in NADPH binding. Sn-glycerol 3-phosphate is bound by residues lysine 194, aspartate 247, serine 257, arginine 258, and asparagine 259. Catalysis depends on lysine 194, which acts as the Proton acceptor. Position 258 (arginine 258) interacts with NADPH. 2 residues coordinate NADPH: valine 282 and glutamate 284.

It belongs to the NAD-dependent glycerol-3-phosphate dehydrogenase family.

Its subcellular location is the cytoplasm. The catalysed reaction is sn-glycerol 3-phosphate + NAD(+) = dihydroxyacetone phosphate + NADH + H(+). It carries out the reaction sn-glycerol 3-phosphate + NADP(+) = dihydroxyacetone phosphate + NADPH + H(+). Its pathway is membrane lipid metabolism; glycerophospholipid metabolism. Its function is as follows. Catalyzes the reduction of the glycolytic intermediate dihydroxyacetone phosphate (DHAP) to sn-glycerol 3-phosphate (G3P), the key precursor for phospholipid synthesis. The chain is Glycerol-3-phosphate dehydrogenase [NAD(P)+] from Streptococcus agalactiae serotype V (strain ATCC BAA-611 / 2603 V/R).